The primary structure comprises 163 residues: NADH-quinone oxidoreductase subunit I (163 aa).

2 consecutive 4Fe-4S ferredoxin-type domains span residues 54-84 (LRRY…IESD) and 94-123 (TRYD…ETQI). Residues Cys-64, Cys-67, Cys-70, Cys-74, Cys-103, Cys-106, Cys-109, and Cys-113 each coordinate [4Fe-4S] cluster.

Belongs to the complex I 23 kDa subunit family. As to quaternary structure, NDH-1 is composed of 14 different subunits. Subunits NuoA, H, J, K, L, M, N constitute the membrane sector of the complex. [4Fe-4S] cluster is required as a cofactor.

It is found in the cell inner membrane. The enzyme catalyses a quinone + NADH + 5 H(+)(in) = a quinol + NAD(+) + 4 H(+)(out). Its function is as follows. NDH-1 shuttles electrons from NADH, via FMN and iron-sulfur (Fe-S) centers, to quinones in the respiratory chain. The immediate electron acceptor for the enzyme in this species is believed to be ubiquinone. Couples the redox reaction to proton translocation (for every two electrons transferred, four hydrogen ions are translocated across the cytoplasmic membrane), and thus conserves the redox energy in a proton gradient. This is NADH-quinone oxidoreductase subunit I from Cupriavidus necator (strain ATCC 17699 / DSM 428 / KCTC 22496 / NCIMB 10442 / H16 / Stanier 337) (Ralstonia eutropha).